The following is a 306-amino-acid chain: UDP-N-acetylenolpyruvoylglucosamine reductase (306 aa).

Positions 34-198 constitute an FAD-binding PCMH-type domain; sequence VGGPADLLIT…LEVTFKLHNS (165 aa). Residue Arg177 is part of the active site. Ser227 (proton donor) is an active-site residue. Glu297 is an active-site residue.

The protein belongs to the MurB family. Requires FAD as cofactor.

Its subcellular location is the cytoplasm. The enzyme catalyses UDP-N-acetyl-alpha-D-muramate + NADP(+) = UDP-N-acetyl-3-O-(1-carboxyvinyl)-alpha-D-glucosamine + NADPH + H(+). The protein operates within cell wall biogenesis; peptidoglycan biosynthesis. Functionally, cell wall formation. This Clostridium botulinum (strain ATCC 19397 / Type A) protein is UDP-N-acetylenolpyruvoylglucosamine reductase.